The following is a 64-amino-acid chain: MPKMKSHRGASKRFKRTASGKLKRGRAYTSHLFGNKSTKAKRKLRKASMVSSGDFKRIRHMIAK.

Residues 1–26 (MPKMKSHRGASKRFKRTASGKLKRGR) show a composition bias toward basic residues. Disordered stretches follow at residues 1 to 28 (MPKMKSHRGASKRFKRTASGKLKRGRAY) and 33 to 52 (FGNKSTKAKRKLRKASMVSS).

The protein belongs to the bacterial ribosomal protein bL35 family.

The chain is Large ribosomal subunit protein bL35 from Exiguobacterium sibiricum (strain DSM 17290 / CCUG 55495 / CIP 109462 / JCM 13490 / 255-15).